The primary structure comprises 177 residues: Large ribosomal subunit protein uL16 (177 aa).

It belongs to the universal ribosomal protein uL16 family. As to quaternary structure, part of the 50S ribosomal subunit. Weakly binds 5S rRNA. Probably binds the A and P site tRNAs.

Its function is as follows. This is 1 of 5 proteins that mediate the attachment of the 5S rRNA onto the large ribosomal subunit, stabilizing the orientation of adjacent RNA domains. Modeling places the A and P site tRNAs in close proximity to this protein. The protein is Large ribosomal subunit protein uL16 of Haloarcula marismortui (strain ATCC 43049 / DSM 3752 / JCM 8966 / VKM B-1809) (Halobacterium marismortui).